The following is a 104-amino-acid chain: Large ribosomal subunit protein bL21 (104 aa).

The protein belongs to the bacterial ribosomal protein bL21 family. Part of the 50S ribosomal subunit. Contacts protein L20.

Functionally, this protein binds to 23S rRNA in the presence of protein L20. In Acidiphilium cryptum (strain JF-5), this protein is Large ribosomal subunit protein bL21.